A 328-amino-acid polypeptide reads, in one-letter code: Palmitoyltransferase ZDHHC15A (328 aa).

Residues 1–14 lie on the Cytoplasmic side of the membrane; the sequence is MLLPACLRRCARLL. Residues 15–35 traverse the membrane as a helical segment; it reads FWIPVLVVIVVVMWSYYAYVV. Residues 36–48 lie on the Lumenal side of the membrane; the sequence is HFCWILLSSATQR. The chain crosses the membrane as a helical span at residues 49–69; it reads VVFLCLFHLCFGMFSWSFWKA. Residues 70–166 lie on the Cytoplasmic side of the membrane; that stretch reads VSTPPSSPSV…NNCMGFSNYK (97 aa). Residues 123–173 enclose the DHHC domain; that stretch reads RFCHHCQLIKPDRCHHCSVCQTCVLKMDHHCLWLNNCMGFSNYKFFMLFLL. Zn(2+)-binding residues include cysteine 125 and cysteine 128. A substrate-binding site is contributed by lysine 132. Positions 138, 139, 142, 145, and 152 each coordinate Zn(2+). The active-site S-palmitoyl cysteine intermediate is cysteine 153. Zn(2+) is bound at residue cysteine 159. The helical transmembrane segment at 167 to 187 threads the bilayer; the sequence is FFMLFLLYSLLYCLLIVSTVT. At 188-206 the chain is on the lumenal side; it reads PTVIQLWRGRLFDSCVKLH. Residues 207 to 227 traverse the membrane as a helical segment; that stretch reads VLFLTLVSAIFAITLCFLLIF. Over 228–328 the chain is Cytoplasmic; it reads HIWLLTSNKT…KEAAVTIAVD (101 aa).

Belongs to the DHHC palmitoyltransferase family. Post-translationally, autopalmitoylated (in vitro).

It is found in the golgi apparatus membrane. The protein resides in the postsynaptic density. It carries out the reaction L-cysteinyl-[protein] + hexadecanoyl-CoA = S-hexadecanoyl-L-cysteinyl-[protein] + CoA. The catalysed reaction is L-cysteinyl-[protein] + tetradecanoyl-CoA = S-tetradecanoyl-L-cysteinyl-[protein] + CoA. It catalyses the reaction L-cysteinyl-[protein] + octadecanoyl-CoA = S-octadecanoyl-L-cysteinyl-[protein] + CoA. Functionally, palmitoyltransferase that catalyzes the addition of palmitate onto various protein substrates. Has no stringent fatty acid selectivity and in addition to palmitate can also transfer onto target proteins myristate from tetradecanoyl-CoA and stearate from octadecanoyl-CoA. May thereby regulate target proteins association and localization to membranes. The sequence is that of Palmitoyltransferase ZDHHC15A (zdhhc15a) from Danio rerio (Zebrafish).